Reading from the N-terminus, the 608-residue chain is Albumin 2 (608 aa).

Residues 1–14 (MQWLSVCSLLVLLS) form the signal peptide. The propeptide occupies 15 to 18 (VLSR). 3 Albumin domains span residues 19-205 (SQAQ…TFQH), 206-398 (AIAK…AGSD), and 402-600 (KITD…KLVS). 18 disulfide bridges follow: Cys-26–Cys-72, Cys-71–Cys-80, Cys-93–Cys-108, Cys-107–Cys-118, Cys-142–Cys-187, Cys-186–Cys-195, Cys-218–Cys-264, Cys-263–Cys-271, Cys-283–Cys-299, Cys-298–Cys-309, Cys-336–Cys-381, Cys-380–Cys-389, Cys-414–Cys-460, Cys-459–Cys-471, Cys-484–Cys-500, Cys-499–Cys-510, Cys-537–Cys-582, and Cys-581–Cys-590. Asn-501 is a glycosylation site (N-linked (GlcNAc...) asparagine).

The protein belongs to the ALB/AFP/VDB family. Plasma.

The protein resides in the secreted. Its function is as follows. Binds water, Ca(2+), Na(+), K(+), fatty acids, hormones, bilirubin and drugs. Its main function is the regulation of the colloidal osmotic pressure of blood. The polypeptide is Albumin 2 (alb2) (Salmo salar (Atlantic salmon)).